A 160-amino-acid chain; its full sequence is Lymphocyte antigen 96 (160 aa).

The signal sequence occupies residues 1–16; it reads MFPFMLFSTLFSSIFT. 3 cysteine pairs are disulfide-bonded: C25–C51, C37–C148, and C95–C105. N26 carries N-linked (GlcNAc...) asparagine glycosylation. Residue N114 is glycosylated (N-linked (GlcNAc...) asparagine). Positions 119–123 are interaction with lipopolysaccharide; it reads FSFQG. N150 carries N-linked (GlcNAc...) asparagine glycosylation.

As to quaternary structure, heterogeneous homomer formed from homodimers; disulfide-linked. Belongs to the lipopolysaccharide (LPS) receptor, a multi-protein complex containing at least CD14, LY96 and TLR4. Binds to the extracellular domains of TLR2 and TLR4. Ligand binding induces interaction with TLR4 and oligomerization of the complex. Post-translationally, N-glycosylated.

It localises to the secreted. It is found in the extracellular space. Its function is as follows. Binds bacterial lipopolysaccharide (LPS). Cooperates with TLR4 in the innate immune response to bacterial lipopolysaccharide (LPS), and with TLR2 in the response to cell wall components from Gram-positive and Gram-negative bacteria. Enhances TLR4-dependent activation of NF-kappa-B. Cells expressing both LY96 and TLR4, but not TLR4 alone, respond to LPS. The sequence is that of Lymphocyte antigen 96 (LY96) from Bos taurus (Bovine).